We begin with the raw amino-acid sequence, 89 residues long: Large ribosomal subunit protein bL31B (89 aa).

The protein belongs to the bacterial ribosomal protein bL31 family. Type B subfamily. In terms of assembly, part of the 50S ribosomal subunit.

This chain is Large ribosomal subunit protein bL31B, found in Aeromonas salmonicida (strain A449).